Here is a 153-residue protein sequence, read N- to C-terminus: Arginine regulator (153 aa).

It belongs to the ArgR family.

The protein localises to the cytoplasm. Its pathway is amino-acid degradation; L-arginine degradation via ADI pathway. In terms of biological role, regulates the transcription of the arc operon, involved in arginine catabolism. The protein is Arginine regulator (argR1) of Lactiplantibacillus plantarum (strain ATCC BAA-793 / NCIMB 8826 / WCFS1) (Lactobacillus plantarum).